We begin with the raw amino-acid sequence, 567 residues long: Unguisins hydrolase ungD (567 aa).

The protein belongs to the peptidase S12 family.

It participates in secondary metabolite biosynthesis. Hydrolase; part of the gene cluster that mediates the biosynthesis of the unguisins, gamma-aminobutyric acid (GABA)-containing fungal cyclic heptapeptides with the amino acid sequence cyclo-(D-Ala1-D-Val2-L-Phe3-D-Val4-D-Ala5-D-Trp6-GABA7) for unguisin A and cyclo-(D-Ala1-D-Val2-L-Leu3-D-Val4-D-Ala5-D-Trp6-GABA7) for unguisin B. Within the pathway, the hydrolase ungD catalyzes the hydrolysis between the D-tryptophan and GABA residues of unguisins A and B to produce the corresponding linear peptides. The alanine racemase ungC catalyzes the interconversion of L-alanine and D-alanine, providing the D-alanine which is accepted by the first adenylation domain of the nonribosomal peptide synthetase (NRPS) ungA. UngA is the main enzyme within the cluster which condenses the 7 residues using its respective 7 modules. The terminal condensation domain (Ct) is involved in cyclization with D-alanine and thereby releasing of unguisins A and B. In Aspergillus violaceofuscus (strain CBS 115571), this protein is Unguisins hydrolase ungD.